Here is a 415-residue protein sequence, read N- to C-terminus: Protein maelstrom homolog (415 aa).

The segment at residues 4–73 is a DNA-binding region (HMG box); that stretch reads KKAARNAYFF…DPDSTSTYND (70 aa). Residues 367-399 form a disordered region; it reads SSDPKYSTDKSERSSFEPRGVKPYQGPSGGGRG. The segment covering 372-386 has biased composition (basic and acidic residues); it reads YSTDKSERSSFEPRG.

The protein belongs to the maelstrom family.

It localises to the cytoplasm. The protein resides in the nucleus. Its function is as follows. Plays a central role during spermatogenesis by repressing transposable elements and preventing their mobilization, which is essential for the germline integrity. Acts via the piRNA metabolic process, which mediates the repression of transposable elements during meiosis by forming complexes composed of piRNAs and Piwi proteins and governs the methylation and subsequent repression of transposons. Its association with piP-bodies suggests a participation in the secondary piRNAs metabolic process. Required for the localization of germ-cell factors to the meiotic nuage. In Xenopus tropicalis (Western clawed frog), this protein is Protein maelstrom homolog (mael).